A 189-amino-acid polypeptide reads, in one-letter code: UPF0232 protein MLBr00004 (189 aa).

The tract at residues 59 to 78 (TDRRRNWSGPGPDVRDPQPL) is disordered.

This sequence belongs to the UPF0232 family.

The sequence is that of UPF0232 protein MLBr00004 from Mycobacterium leprae (strain Br4923).